The sequence spans 217 residues: 3,4-dihydroxy-2-butanone 4-phosphate synthase (217 aa).

D-ribulose 5-phosphate is bound by residues 37–38 (RE), D42, 150–154 (RRGHT), and E174. Position 38 (E38) interacts with Mg(2+). Residue H153 participates in Mg(2+) binding.

It belongs to the DHBP synthase family. In terms of assembly, homodimer. It depends on Mg(2+) as a cofactor. Mn(2+) serves as cofactor.

The enzyme catalyses D-ribulose 5-phosphate = (2S)-2-hydroxy-3-oxobutyl phosphate + formate + H(+). Its pathway is cofactor biosynthesis; riboflavin biosynthesis; 2-hydroxy-3-oxobutyl phosphate from D-ribulose 5-phosphate: step 1/1. Its function is as follows. Catalyzes the conversion of D-ribulose 5-phosphate to formate and 3,4-dihydroxy-2-butanone 4-phosphate. The protein is 3,4-dihydroxy-2-butanone 4-phosphate synthase of Shewanella sp. (strain MR-4).